A 1126-amino-acid polypeptide reads, in one-letter code: Ubiquitin carboxyl-terminal hydrolase 16/45 (1126 aa).

Basic and acidic residues predominate over residues 1-15 (MVKKRQADSRDHDCS). The disordered stretch occupies residues 1–44 (MVKKRQADSRDHDCSTDSGNEDLHHRKGLGSPGQSDGATPTTAS). The span at 32–44 (PGQSDGATPTTAS) shows a compositional bias: polar residues. The segment at 43–181 (ASCQHIKKAV…ELVKKLAQKP (139 aa)) adopts a UBP-type zinc-finger fold. C45, H47, C70, C73, C111, C114, C119, H126, H130, H139, C152, and C155 together coordinate Zn(2+). Low complexity-rich tracts occupy residues 215-229 (GGSF…SLAA) and 254-264 (SSGLSTSDSLT). Residues 215-264 (GGSFDDSSSRGSLAAAGGGGGVGSSRNRQVAIPMPPPEPSSGLSTSDSLT) form a disordered region. Residue C315 is the Nucleophile of the active site. Disordered stretches follow at residues 513-547 (KPQP…INTK), 570-762 (ASLG…SGSS), and 795-833 (EQGA…ARTK). The span at 524–539 (PELSLTSSSSSVTPST) shows a compositional bias: low complexity. A compositionally biased stretch (basic residues) spans 586-598 (QRKAKRAAKKRQK). Low complexity-rich tracts occupy residues 599–614 (SSLN…GNEL) and 646–657 (TEDSTTSSVTTS). The span at 674 to 701 (APSTNNVPSSTASLTAPSKTYMDSNGNA) shows a compositional bias: polar residues. Positions 705–718 (GEKRDDTPEHMDKD) are enriched in basic and acidic residues. The segment covering 730-762 (ATSPAPTATNSSTSTSATGNNNSVAGSGLSGSS) has biased composition (low complexity). The span at 807 to 816 (GEAKAIEQPE) shows a compositional bias: basic and acidic residues. A compositionally biased stretch (low complexity) spans 821 to 830 (QAQAMAQAQA). Residue H984 is the Proton acceptor of the active site. Residues 1037–1089 (LKVLDDSDDFSNSSSNSSTSDESQTPATPLEEQQTQQAQQPQQPQQLEEAANV) are disordered. Over residues 1046–1086 (FSNSSSNSSTSDESQTPATPLEEQQTQQAQQPQQPQQLEEA) the composition is skewed to low complexity.

This sequence belongs to the peptidase C19 family.

The catalysed reaction is Thiol-dependent hydrolysis of ester, thioester, amide, peptide and isopeptide bonds formed by the C-terminal Gly of ubiquitin (a 76-residue protein attached to proteins as an intracellular targeting signal).. In terms of biological role, involved in the regulation of DNA damage repair. The chain is Ubiquitin carboxyl-terminal hydrolase 16/45 from Drosophila melanogaster (Fruit fly).